The following is a 344-amino-acid chain: Ribosomal RNA small subunit methyltransferase H 2 (344 aa).

Residues 78–80 (GGH), D98, F131, D145, and Q152 each bind S-adenosyl-L-methionine.

It belongs to the methyltransferase superfamily. RsmH family.

The protein localises to the cytoplasm. The catalysed reaction is cytidine(1402) in 16S rRNA + S-adenosyl-L-methionine = N(4)-methylcytidine(1402) in 16S rRNA + S-adenosyl-L-homocysteine + H(+). Its function is as follows. Specifically methylates the N4 position of cytidine in position 1402 (C1402) of 16S rRNA. The polypeptide is Ribosomal RNA small subunit methyltransferase H 2 (Acholeplasma laidlawii (strain PG-8A)).